The chain runs to 319 residues: Biotin synthase (319 aa).

The 230-residue stretch at 44–273 (IHGDGIDLCS…EAKIRLAGGR (230 aa)) folds into the Radical SAM core domain. Residues cysteine 62, cysteine 66, and cysteine 69 each contribute to the [4Fe-4S] cluster site. [2Fe-2S] cluster-binding residues include serine 106, cysteine 138, cysteine 198, and arginine 268.

Belongs to the radical SAM superfamily. Biotin synthase family. As to quaternary structure, homodimer. Requires [4Fe-4S] cluster as cofactor. [2Fe-2S] cluster is required as a cofactor.

It carries out the reaction (4R,5S)-dethiobiotin + (sulfur carrier)-SH + 2 reduced [2Fe-2S]-[ferredoxin] + 2 S-adenosyl-L-methionine = (sulfur carrier)-H + biotin + 2 5'-deoxyadenosine + 2 L-methionine + 2 oxidized [2Fe-2S]-[ferredoxin]. Its pathway is cofactor biosynthesis; biotin biosynthesis; biotin from 7,8-diaminononanoate: step 2/2. Catalyzes the conversion of dethiobiotin (DTB) to biotin by the insertion of a sulfur atom into dethiobiotin via a radical-based mechanism. This chain is Biotin synthase, found in Clostridium perfringens (strain 13 / Type A).